The primary structure comprises 436 residues: 3-ketoacyl-CoA thiolase (436 aa).

Cysteine 99 acts as the Acyl-thioester intermediate in catalysis. Residues histidine 392 and cysteine 422 each act as proton acceptor in the active site.

It belongs to the thiolase-like superfamily. Thiolase family. As to quaternary structure, heterotetramer of two alpha chains (FadJ) and two beta chains (FadI).

It localises to the cytoplasm. The catalysed reaction is an acyl-CoA + acetyl-CoA = a 3-oxoacyl-CoA + CoA. Its pathway is lipid metabolism; fatty acid beta-oxidation. Its function is as follows. Catalyzes the final step of fatty acid oxidation in which acetyl-CoA is released and the CoA ester of a fatty acid two carbons shorter is formed. The sequence is that of 3-ketoacyl-CoA thiolase from Enterobacter sp. (strain 638).